The primary structure comprises 1063 residues: Endo-1,4-beta-xylanase 2 (1063 aa).

CBM-cenC domains lie at 5-146 (NIVM…GPAP), 183-313 (NIIK…LEGP), 348-482 (NHIF…IEGP), and 517-662 (NIVS…QGPS). A GH10 domain is found at 711 to 1006 (SGATVKIRQT…NEAGKRFLEI (296 aa)). The Proton donor role is filled by glutamate 840. Glutamate 941 functions as the Nucleophile in the catalytic mechanism.

This sequence belongs to the glycosyl hydrolase 10 (cellulase F) family.

The enzyme catalyses Endohydrolysis of (1-&gt;4)-beta-D-xylosidic linkages in xylans.. Its pathway is glycan degradation; xylan degradation. Binds to and hydrolyzes insoluble and soluble xylan substrates. The polypeptide is Endo-1,4-beta-xylanase 2 (Arabidopsis thaliana (Mouse-ear cress)).